A 141-amino-acid chain; its full sequence is Nucleoside triphosphatase NudI (141 aa).

Residues Met-1–Leu-141 enclose the Nudix hydrolase domain. The Nudix box signature appears at Gly-38 to Gly-59.

This sequence belongs to the Nudix hydrolase family. NudI subfamily. In terms of assembly, monomer. Mg(2+) is required as a cofactor.

The enzyme catalyses a ribonucleoside 5'-triphosphate + H2O = a ribonucleoside 5'-phosphate + diphosphate + H(+). The catalysed reaction is a 2'-deoxyribonucleoside 5'-triphosphate + H2O = a 2'-deoxyribonucleoside 5'-phosphate + diphosphate + H(+). It catalyses the reaction dUTP + H2O = dUMP + diphosphate + H(+). It carries out the reaction dTTP + H2O = dTMP + diphosphate + H(+). The enzyme catalyses dCTP + H2O = dCMP + diphosphate + H(+). Catalyzes the hydrolysis of nucleoside triphosphates, with a preference for pyrimidine deoxynucleoside triphosphates (dUTP, dTTP and dCTP). This chain is Nucleoside triphosphatase NudI, found in Escherichia coli O9:H4 (strain HS).